The sequence spans 459 residues: Bifunctional protein GlmU (459 aa).

A pyrophosphorylase region spans residues 1–230 (MSNRFAVILA…FDETLGVNDR (230 aa)). UDP-N-acetyl-alpha-D-glucosamine-binding positions include 9-12 (LAAG), Lys23, Gln73, and 78-79 (GT). Residue Asp103 participates in Mg(2+) binding. Residues Gly140, Glu155, Asn170, and Asn228 each coordinate UDP-N-acetyl-alpha-D-glucosamine. Asn228 provides a ligand contact to Mg(2+). The linker stretch occupies residues 231 to 251 (VALSQAEIIMKNRINRKNMVN). The interval 252–459 (GVTIIDPSNT…VDQLLNKKKS (208 aa)) is N-acetyltransferase. Residues Arg333 and Lys351 each coordinate UDP-N-acetyl-alpha-D-glucosamine. His363 serves as the catalytic Proton acceptor. 2 residues coordinate UDP-N-acetyl-alpha-D-glucosamine: Tyr366 and Asn377. Residues 386–387 (NY), Ala423, and Arg440 contribute to the acetyl-CoA site.

It in the N-terminal section; belongs to the N-acetylglucosamine-1-phosphate uridyltransferase family. This sequence in the C-terminal section; belongs to the transferase hexapeptide repeat family. In terms of assembly, homotrimer. Requires Mg(2+) as cofactor.

The protein resides in the cytoplasm. It catalyses the reaction alpha-D-glucosamine 1-phosphate + acetyl-CoA = N-acetyl-alpha-D-glucosamine 1-phosphate + CoA + H(+). It carries out the reaction N-acetyl-alpha-D-glucosamine 1-phosphate + UTP + H(+) = UDP-N-acetyl-alpha-D-glucosamine + diphosphate. It participates in nucleotide-sugar biosynthesis; UDP-N-acetyl-alpha-D-glucosamine biosynthesis; N-acetyl-alpha-D-glucosamine 1-phosphate from alpha-D-glucosamine 6-phosphate (route II): step 2/2. The protein operates within nucleotide-sugar biosynthesis; UDP-N-acetyl-alpha-D-glucosamine biosynthesis; UDP-N-acetyl-alpha-D-glucosamine from N-acetyl-alpha-D-glucosamine 1-phosphate: step 1/1. Its pathway is bacterial outer membrane biogenesis; LPS lipid A biosynthesis. Its function is as follows. Catalyzes the last two sequential reactions in the de novo biosynthetic pathway for UDP-N-acetylglucosamine (UDP-GlcNAc). The C-terminal domain catalyzes the transfer of acetyl group from acetyl coenzyme A to glucosamine-1-phosphate (GlcN-1-P) to produce N-acetylglucosamine-1-phosphate (GlcNAc-1-P), which is converted into UDP-GlcNAc by the transfer of uridine 5-monophosphate (from uridine 5-triphosphate), a reaction catalyzed by the N-terminal domain. This is Bifunctional protein GlmU from Bacillus cereus (strain AH187).